A 229-amino-acid polypeptide reads, in one-letter code: Cytidylate kinase (229 aa).

Residue 12-20 (GPSGAGKGT) participates in ATP binding.

Belongs to the cytidylate kinase family. Type 1 subfamily.

It localises to the cytoplasm. It catalyses the reaction CMP + ATP = CDP + ADP. The catalysed reaction is dCMP + ATP = dCDP + ADP. This is Cytidylate kinase from Pseudomonas aeruginosa (strain UCBPP-PA14).